We begin with the raw amino-acid sequence, 436 residues long: MKPLIALVGRPNVGKSTLFNRILRERAAIVDSTPGVTRDRHISEGFWQGRAFRLMDTGGYAPEDGVISNAMLEQTMTAINDADIVVFVADARAGLSYDDLELAKVLRQRFSHKPVFFAVNKVESPQLAYEAASFVSTGYTEPWCISAKDGSGVADLLDAILLEMPESDADQEEDGAIRLAVVGRPNVGKSSFVNALLGNNRQIVSDIPGTTRDAIDTRFTRNQQDFLLIDTAGLRKRTKISAGIEYYSSLRSEKAIERCEVVMVMIDAGPGIEKQDLKIINMATERKRAVLLLVNKWDLIEKDSKTSKQYEDTLRSHMGNLAYVPVLFISALTKKNLYRAIDTAREIRDNRARKISTSALNRFLEEALAANPPSSKGGTELKIKYMTQIQAAWPVFAFFCNNPELVQTNFRKFLENRLREKFDLKGVTISLRFLQK.

2 consecutive EngA-type G domains span residues 3–168 (PLIA…PESD) and 177–352 (IRLA…DNRA). GTP is bound by residues 9–16 (GRPNVGKS), 56–60 (DTGGY), 120–123 (NKVE), 183–190 (GRPNVGKS), 230–234 (DTAGL), and 295–298 (NKWD). The KH-like domain maps to 353–436 (RKISTSALNR…VTISLRFLQK (84 aa)).

This sequence belongs to the TRAFAC class TrmE-Era-EngA-EngB-Septin-like GTPase superfamily. EngA (Der) GTPase family. Associates with the 50S ribosomal subunit.

GTPase that plays an essential role in the late steps of ribosome biogenesis. The polypeptide is GTPase Der (Chlorobium phaeovibrioides (strain DSM 265 / 1930) (Prosthecochloris vibrioformis (strain DSM 265))).